A 489-amino-acid chain; its full sequence is Probable cytosol aminopeptidase (489 aa).

Mn(2+) is bound by residues Lys260 and Asp265. Lys272 is a catalytic residue. Mn(2+)-binding residues include Asp283, Asp342, and Glu344. Arg346 is a catalytic residue.

Belongs to the peptidase M17 family. It depends on Mn(2+) as a cofactor.

It localises to the cytoplasm. It catalyses the reaction Release of an N-terminal amino acid, Xaa-|-Yaa-, in which Xaa is preferably Leu, but may be other amino acids including Pro although not Arg or Lys, and Yaa may be Pro. Amino acid amides and methyl esters are also readily hydrolyzed, but rates on arylamides are exceedingly low.. It carries out the reaction Release of an N-terminal amino acid, preferentially leucine, but not glutamic or aspartic acids.. Presumably involved in the processing and regular turnover of intracellular proteins. Catalyzes the removal of unsubstituted N-terminal amino acids from various peptides. This is Probable cytosol aminopeptidase from Alcanivorax borkumensis (strain ATCC 700651 / DSM 11573 / NCIMB 13689 / SK2).